A 482-amino-acid chain; its full sequence is Glycogen synthase (482 aa).

Lys-20 is an ADP-alpha-D-glucose binding site.

The protein belongs to the glycosyltransferase 1 family. Bacterial/plant glycogen synthase subfamily.

It catalyses the reaction [(1-&gt;4)-alpha-D-glucosyl](n) + ADP-alpha-D-glucose = [(1-&gt;4)-alpha-D-glucosyl](n+1) + ADP + H(+). The protein operates within glycan biosynthesis; glycogen biosynthesis. Functionally, synthesizes alpha-1,4-glucan chains using ADP-glucose. The chain is Glycogen synthase from Aliivibrio salmonicida (strain LFI1238) (Vibrio salmonicida (strain LFI1238)).